The primary structure comprises 478 residues: Sulfate adenylyltransferase subunit 1 (478 aa).

Residues 24 to 240 enclose the tr-type G domain; the sequence is KSLLRFLTCG…VLENVDIDAD (217 aa). Residues 33-40 form a G1 region; sequence GSVDDGKS. 33-40 lines the GTP pocket; the sequence is GSVDDGKS. The segment at 91 to 95 is G2; it reads GITID. The interval 112-115 is G3; sequence DTPG. Residues 112-116 and 167-170 contribute to the GTP site; these read DTPGH and NKMD. The tract at residues 167–170 is G4; the sequence is NKMD. A G5 region spans residues 206-208; sequence SAL.

The protein belongs to the TRAFAC class translation factor GTPase superfamily. Classic translation factor GTPase family. CysN/NodQ subfamily. In terms of assembly, heterodimer composed of CysD, the smaller subunit, and CysN.

It catalyses the reaction sulfate + ATP + H(+) = adenosine 5'-phosphosulfate + diphosphate. Its pathway is sulfur metabolism; hydrogen sulfide biosynthesis; sulfite from sulfate: step 1/3. Functionally, with CysD forms the ATP sulfurylase (ATPS) that catalyzes the adenylation of sulfate producing adenosine 5'-phosphosulfate (APS) and diphosphate, the first enzymatic step in sulfur assimilation pathway. APS synthesis involves the formation of a high-energy phosphoric-sulfuric acid anhydride bond driven by GTP hydrolysis by CysN coupled to ATP hydrolysis by CysD. The protein is Sulfate adenylyltransferase subunit 1 of Aliivibrio fischeri (strain ATCC 700601 / ES114) (Vibrio fischeri).